The chain runs to 845 residues: P protein (845 aa).

The disordered stretch occupies residues 1 to 57 (MRLENREGRPTSGVLEMELPQASAPSRAGLGSLGLVGLDSSNHRPQQGGSKAGSRGP). The Extracellular segment spans residues 1–183 (MRLENREGRP…HLSKLRCCVQ (183 aa)). Low complexity predominate over residues 26 to 40 (SRAGLGSLGLVGLDS). The chain crosses the membrane as a helical span at residues 184–204 (WLKVSGLFVFVVLCSILFSLY). Topologically, residues 205–337 (PDQGKFWQLL…QYLRASIEAQ (133 aa)) are cytoplasmic. Residues 338–358 (VTIAAVILAGVYVLIIFEIVH) form a helical membrane-spanning segment. Residues 359 to 360 (RT) lie on the Extracellular side of the membrane. The helical transmembrane segment at 361–381 (LAAMLGSLAALAALAVIGDRP) threads the bilayer. The Cytoplasmic portion of the chain corresponds to 382–393 (TLTQVVEWIDFE). The chain crosses the membrane as a helical span at residues 394-414 (TLALLFGMMILVAIFSETGFF). Topologically, residues 415-429 (DYCAVKAYQLSRGRV) are extracellular. Residues 430–450 (WAMIIMLCLIAAVLSAFLDNV) form a helical membrane-spanning segment. Residues 451–513 (TTALLFTPVT…ELRKMGLDFA (63 aa)) lie on the Cytoplasmic side of the membrane. Residues 514–534 (GFTAHMFAGICFVLLFSFPLL) traverse the membrane as a helical segment. Residues 535 to 629 (RLLYWNRKLY…KKHRISDRTL (95 aa)) are Extracellular-facing. Residues 630–650 (LTKCVTVLGLVIFMFFLNSFV) form a helical membrane-spanning segment. Position 651 (P651) is a topological domain, cytoplasmic. Residues 652-672 (GVHLDLGWIAILGAIWLLILA) traverse the membrane as a helical segment. The Extracellular portion of the chain corresponds to 673–687 (DIHDFEIILHRVEWA). The chain crosses the membrane as a helical span at residues 688–708 (TLLFFAALFILMEALAHLHLI). Topologically, residues 709 to 730 (EYVGEQTALLIKMVPEDQRLAA) are cytoplasmic. A helical transmembrane segment spans residues 731-751 (AIIVVVWVSAIASSLIDNIPF). Residues 752 to 773 (TATMIPVLLNLSRDPEISLPAP) are Extracellular-facing. The chain crosses the membrane as a helical span at residues 774–794 (PLMYALALGACLGGNGTLIGA). Over 795–820 (SANVVCAGIAEQHGYGFSFMEFFRLG) the chain is Cytoplasmic. Residues 821-841 (FPMMVVSCMVGMCYLLVAHVV) traverse the membrane as a helical segment. The Extracellular segment spans residues 842–845 (MGWN).

It belongs to the CitM (TC 2.A.11) transporter family.

It localises to the melanosome membrane. It catalyses the reaction chloride(in) = chloride(out). Functionally, contributes to a melanosome-specific anion (chloride) current that modulates melanosomal pH for optimal tyrosinase activity required for melanogenesis and the melanosome maturation. One of the components of the mammalian pigmentary system. May serve as a key control point at which ethnic skin color variation is determined. Major determinant of brown and/or blue eye color. Seems to regulate the post-translational processing of tyrosinase, which catalyzes the limiting reaction in melanin synthesis. This is P protein (Oca2) from Sus scrofa (Pig).